The chain runs to 572 residues: Proline--tRNA ligase (572 aa).

It belongs to the class-II aminoacyl-tRNA synthetase family. ProS type 1 subfamily. Homodimer.

Its subcellular location is the cytoplasm. It catalyses the reaction tRNA(Pro) + L-proline + ATP = L-prolyl-tRNA(Pro) + AMP + diphosphate. Its function is as follows. Catalyzes the attachment of proline to tRNA(Pro) in a two-step reaction: proline is first activated by ATP to form Pro-AMP and then transferred to the acceptor end of tRNA(Pro). As ProRS can inadvertently accommodate and process non-cognate amino acids such as alanine and cysteine, to avoid such errors it has two additional distinct editing activities against alanine. One activity is designated as 'pretransfer' editing and involves the tRNA(Pro)-independent hydrolysis of activated Ala-AMP. The other activity is designated 'posttransfer' editing and involves deacylation of mischarged Ala-tRNA(Pro). The misacylated Cys-tRNA(Pro) is not edited by ProRS. The polypeptide is Proline--tRNA ligase (Shewanella amazonensis (strain ATCC BAA-1098 / SB2B)).